The chain runs to 328 residues: Flotillin-like protein FloA (328 aa).

A run of 2 helical transmembrane segments spans residues 9–29 (LLIT…VPVG) and 30–50 (LWIS…IGMR).

Belongs to the flotillin-like FloA family. Homooligomerizes.

It localises to the cell membrane. It is found in the membrane raft. Its function is as follows. Found in functional membrane microdomains (FMM) that may be equivalent to eukaryotic membrane rafts. FMMs are highly dynamic and increase in number as cells age. Flotillins are thought to be important factors in membrane fluidity. This is Flotillin-like protein FloA from Exiguobacterium sp. (strain ATCC BAA-1283 / AT1b).